We begin with the raw amino-acid sequence, 415 residues long: Tyrosine-protein phosphatase non-receptor type 2 (415 aa).

Positions 5–275 (IEREFEELDT…RFSYMAIIEG (271 aa)) constitute a Tyrosine-protein phosphatase domain. Position 22 is a phosphotyrosine (Y22). Phosphoserine is present on S52. Phosphotyrosine is present on Y68. Residues D182, 216-222 (CSAGIGR), and Q260 contribute to the substrate site. The Phosphocysteine intermediate role is filled by C216. An S-nitrosocysteine modification is found at C216. S293, S298, and S304 each carry phosphoserine. The tract at residues 346–415 (ESALRKRIRE…WTLFFQQNAL (70 aa)) is endoplasmic reticulum location. Residues 376-415 (ERKRKRWLYWQPILTKMGFMSVILVGAFVGWTLFFQQNAL) form a mediates interaction with STX17 region.

This sequence belongs to the protein-tyrosine phosphatase family. Non-receptor class 1 subfamily. As to quaternary structure, interacts with RMDN3. Isoform 1 interacts with TMED9. Isoform 1 interacts with STX17; dephosphorylates STX17. Interacts with ITGA1 (via cytoplasmic domain); activates the phosphatase activity towards EGFR. Interacts with TRAF2; probably involved in tumor necrosis factor-mediated signaling. Interacts with MET. Interacts with FAM220A and STAT3; interaction with FAM220A promotes interaction of PTPN2 with transcriptional activator STAT3, leading to dephosphorylation of STAT3 by PTPN2 and negative regulation of STAT3 transcriptional activator activity. Post-translationally, specifically phosphorylated in a cell cycle-dependent manner by cyclin-dependent kinases CDK1 and CDK2. Probably activated through phosphorylation by PKR. In terms of tissue distribution, ubiquitously expressed. Isoform 2 is probably the major isoform. Isoform 1 is expressed in T-cells and in placenta.

The protein resides in the endoplasmic reticulum. The protein localises to the endoplasmic reticulum-Golgi intermediate compartment. It localises to the nucleus. Its subcellular location is the cytoplasm. It is found in the cell membrane. It catalyses the reaction O-phospho-L-tyrosyl-[protein] + H2O = L-tyrosyl-[protein] + phosphate. Functionally, non-receptor type tyrosine-specific phosphatase that dephosphorylates receptor protein tyrosine kinases including INSR, EGFR, CSF1R, PDGFR. Also dephosphorylates non-receptor protein tyrosine kinases like JAK1, JAK2, JAK3, Src family kinases, STAT1, STAT3 and STAT6 either in the nucleus or the cytoplasm. Negatively regulates numerous signaling pathways and biological processes like hematopoiesis, inflammatory response, cell proliferation and differentiation, and glucose homeostasis. Plays a multifaceted and important role in the development of the immune system. Functions in T-cell receptor signaling through dephosphorylation of FYN and LCK to control T-cells differentiation and activation. Dephosphorylates CSF1R, negatively regulating its downstream signaling and macrophage differentiation. Negatively regulates cytokine (IL2/interleukin-2 and interferon)-mediated signaling through dephosphorylation of the cytoplasmic kinases JAK1, JAK3 and their substrate STAT1, that propagate signaling downstream of the cytokine receptors. Also regulates the IL6/interleukin-6 and IL4/interleukin-4 cytokine signaling through dephosphorylation of STAT3 and STAT6 respectively. In addition to the immune system, it is involved in anchorage-dependent, negative regulation of EGF-stimulated cell growth. Activated by the integrin ITGA1/ITGB1, it dephosphorylates EGFR and negatively regulates EGF signaling. Dephosphorylates PDGFRB and negatively regulates platelet-derived growth factor receptor-beta signaling pathway and therefore cell proliferation. Negatively regulates tumor necrosis factor-mediated signaling downstream via MAPK through SRC dephosphorylation. May also regulate the hepatocyte growth factor receptor signaling pathway through dephosphorylation of the hepatocyte growth factor receptor MET. Also plays an important role in glucose homeostasis. For instance, negatively regulates the insulin receptor signaling pathway through the dephosphorylation of INSR and control gluconeogenesis and liver glucose production through negative regulation of the IL6 signaling pathways. May also bind DNA. The chain is Tyrosine-protein phosphatase non-receptor type 2 (PTPN2) from Homo sapiens (Human).